A 109-amino-acid chain; its full sequence is Sperm-specific class P protein 9/11 (109 aa).

The MSP domain maps to 2-109 (SLTADPPACT…TVTIPMSATA (108 aa)).

Expressed at higher level in testis.

The chain is Sperm-specific class P protein 9/11 (ssp-9) from Caenorhabditis elegans.